A 102-amino-acid polypeptide reads, in one-letter code: Co-chaperonin GroES (102 aa).

The protein belongs to the GroES chaperonin family. Heptamer of 7 subunits arranged in a ring. Interacts with the chaperonin GroEL.

The protein resides in the cytoplasm. Functionally, together with the chaperonin GroEL, plays an essential role in assisting protein folding. The GroEL-GroES system forms a nano-cage that allows encapsulation of the non-native substrate proteins and provides a physical environment optimized to promote and accelerate protein folding. GroES binds to the apical surface of the GroEL ring, thereby capping the opening of the GroEL channel. In Streptomyces avermitilis (strain ATCC 31267 / DSM 46492 / JCM 5070 / NBRC 14893 / NCIMB 12804 / NRRL 8165 / MA-4680), this protein is Co-chaperonin GroES.